Reading from the N-terminus, the 888-residue chain is Extra-large guanine nucleotide-binding protein 1 (888 aa).

The disordered stretch occupies residues 98–119; sequence SVIEHTEEEEEEEGGDGEDCEL. A compositionally biased stretch (acidic residues) spans 103 to 118; that stretch reads TEEEEEEEGGDGEDCE. The Nuclear localization signal motif lies at 205-222; it reads RRVRVVPVKKQPQTKGKK. An RING-type; degenerate zinc finger spans residues 225-268; that stretch reads CYRCFKGSRFTEKEVCLVCDAKYCNSCVLRAMGSMPEGRKCVTC. Residues 482–879 form the G-alpha domain; it reads TLQKILLVGN…NICMSEYSMY (398 aa). The tract at residues 485–498 is G1 motif; the sequence is KILLVGNSGSGTST. GTP is bound by residues 490–498 and 661–669; these read GNSGSGTST and DILYAEGVT. Residues Ser-497 and Thr-669 each contribute to the Ca(2+) site. Residues 661–669 are G2 motif; that stretch reads DILYAEGVT. Residues 702–711 are G3 motif; the sequence is YQLIRVPSRG. A G4 motif region spans residues 770 to 777; the sequence is LLILNKYD. 774–777 serves as a coordination point for GTP; that stretch reads NKYD. The segment at 843 to 848 is G5 motif; the sequence is SKSLDP.

It belongs to the G-alpha family. XLG subfamily. Ca(2+) serves as cofactor. In terms of tissue distribution, ubiquitous. Strongly expressed in vascular tissues, root and shoot meristems and lateral root primordia.

The protein resides in the nucleus. Guanine nucleotide-binding proteins (G proteins) are involved as modulators or transducers in various transmembrane signaling systems. Binds GTP with specificity. Plays a role in the root morphogenesis by regulation of the cell proliferation. This Arabidopsis thaliana (Mouse-ear cress) protein is Extra-large guanine nucleotide-binding protein 1 (XLG1).